We begin with the raw amino-acid sequence, 218 residues long: GEM-like protein 6 (218 aa).

The region spanning 96-174 (KIYKRLFKVC…CKINGVNQSQ (79 aa)) is the GRAM domain.

The protein belongs to the GEM family.

This Arabidopsis thaliana (Mouse-ear cress) protein is GEM-like protein 6.